Reading from the N-terminus, the 1324-residue chain is Structural maintenance of chromosomes protein 4 (1324 aa).

Positions 1 to 24 are disordered; that stretch reads MSDKGIFRTSSTPSIVDVTPDRGE. Position 19 is a phosphothreonine; by CDC2 (Thr19). 155–162 is an ATP binding site; it reads GPNGSGKS. Coiled-coil stretches lie at residues 310–337 and 370–628; these read QELS…AKLE and NKKT…KASL. The SMC hinge domain maps to 651-764; it reads NGFFGRLGDL…KNLEQANRIA (114 aa). 2 coiled-coil regions span residues 825-1077 and 1297-1324; these read YRQH…MSNL and LSSR…ILTD.

The protein belongs to the SMC family. SMC4 subfamily. In terms of assembly, forms a heterodimer with cut14/smc2. Component of the condensin complex, which contains the smc2 and smc4 heterodimer, and three non smc subunits that probably regulate the complex: cnd1, cnd2 and cnd3. Interacts with C1739.07. In terms of processing, phosphorylated by CDC2 on Thr-19 at metaphase.

Its subcellular location is the nucleus. The protein resides in the cytoplasm. It is found in the chromosome. Its function is as follows. Central component of the condensin complex, a complex required for conversion of interphase chromatin into mitotic-like condense chromosomes. The condensin complex probably introduces positive supercoils into relaxed DNA in the presence of type I topoisomerases and converts nicked DNA into positive knotted forms in the presence of type II topoisomerases. This chain is Structural maintenance of chromosomes protein 4 (cut3), found in Schizosaccharomyces pombe (strain 972 / ATCC 24843) (Fission yeast).